A 197-amino-acid polypeptide reads, in one-letter code: tRNA(Phe) 7-((3-amino-3-carboxypropyl)-4-demethylwyosine(37)-N(4))-methyltransferase (197 aa).

Belongs to the TYW3 family.

It carries out the reaction 4-demethyl-7-[(3S)-3-amino-3-carboxypropyl]wyosine(37) in tRNA(Phe) + S-adenosyl-L-methionine = 7-[(3S)-3-amino-3-carboxypropyl]wyosine(37) in tRNA(Phe) + S-adenosyl-L-homocysteine + H(+). In terms of biological role, S-adenosyl-L-methionine-dependent methyltransferase that acts as a component of the wyosine derivatives biosynthesis pathway. Probably methylates N-4 position of wybutosine-86 to produce wybutosine-72. The chain is tRNA(Phe) 7-((3-amino-3-carboxypropyl)-4-demethylwyosine(37)-N(4))-methyltransferase from Thermococcus sibiricus (strain DSM 12597 / MM 739).